Here is a 269-residue protein sequence, read N- to C-terminus: BAG family molecular chaperone regulator 4 (269 aa).

Residues methionine 1 to alanine 40 form a disordered region. The span at glutamine 21–glutamine 35 shows a compositional bias: basic and acidic residues. The Ubiquitin-like domain occupies glutamine 46–lysine 122. The BAG domain occupies alanine 138–lysine 219. The interval serine 241–aspartate 269 is disordered.

In terms of assembly, binds to the ATPase domain of HSP70/HSC70 chaperones. Interacts with HSP70-1. Detected in stems, leaves, flowers and roots.

Its function is as follows. Co-chaperone that regulates diverse cellular pathways, such as programmed cell death and stress responses. The chain is BAG family molecular chaperone regulator 4 (BAG4) from Arabidopsis thaliana (Mouse-ear cress).